A 110-amino-acid polypeptide reads, in one-letter code: NADH-quinone oxidoreductase subunit K (110 aa).

The next 3 membrane-spanning stretches (helical) occupy residues 13–33, 41–61, and 73–93; these read LNHYLILSSLVFTIGMFGLFM, ILMSIELMLLAVNINFVAFSI, and IIILTVAAAETSIGLAILLIY.

The protein belongs to the complex I subunit 4L family. NDH-1 is composed of 14 different subunits. Subunits NuoA, H, J, K, L, M, N constitute the membrane sector of the complex.

It is found in the cell inner membrane. The enzyme catalyses a quinone + NADH + 5 H(+)(in) = a quinol + NAD(+) + 4 H(+)(out). Functionally, NDH-1 shuttles electrons from NADH, via FMN and iron-sulfur (Fe-S) centers, to quinones in the respiratory chain. The immediate electron acceptor for the enzyme in this species is believed to be ubiquinone. Couples the redox reaction to proton translocation (for every two electrons transferred, four hydrogen ions are translocated across the cytoplasmic membrane), and thus conserves the redox energy in a proton gradient. The protein is NADH-quinone oxidoreductase subunit K of Rickettsia conorii (strain ATCC VR-613 / Malish 7).